Here is a 228-residue protein sequence, read N- to C-terminus: Translin (228 aa).

A DNA/RNA binding region spans residues Arg-86 to His-90. A leucine-zipper region spans residues Leu-177–Leu-198. Residue Lys-187 is modified to N6-acetyllysine. Position 190 is a phosphoserine (Ser-190). Residue Lys-199 is modified to N6-acetyllysine.

This sequence belongs to the translin family. As to quaternary structure, ring-shaped heterooctamer of six TSN and two TSNAX subunits, DNA/RNA binding occurs inside the ring.

Its subcellular location is the cytoplasm. The protein localises to the nucleus. DNA-binding protein that specifically recognizes consensus sequences at the breakpoint junctions in chromosomal translocations, mostly involving immunoglobulin (Ig)/T-cell receptor gene segments. Seems to recognize single-stranded DNA ends generated by staggered breaks occurring at recombination hot spots. Its function is as follows. Exhibits both single-stranded and double-stranded endoribonuclease activity. May act as an activator of RNA-induced silencing complex (RISC) by facilitating endonucleolytic cleavage of the siRNA passenger strand. The sequence is that of Translin from Homo sapiens (Human).